The chain runs to 372 residues: MNLSSLPFRLLAAAVALCAIAAPASAERIKDLAQVGGVRGNALVGYGLVVGLDGSGDRTSQAPFTVQSLKNLLGELGVNVPANVNPQLKNVAAVAIHAELPPFAKPGQPIDITVSSIANAVSLRGGSLLMAPLKGADGQVYAMAQGNLVVGGFGAQGKDGSRVSVNIPSVGRIPNGATVERALPDVFAGSGEITLNLHQNDFTTVSRMVAAIDNSFGAGTARAVDGVTVSVRSPTDPSARIGLLARLENVELSPGDAPAKVVVNARTGTVVIGQLVRVMPAAIAHGSLTVTISENTNVSQPGAFSGGRTAVTPQSTIKATSEGSRMFKFEGGTTLDQIVRAVNEVGAAPGDLVAILEALKQAGALTAELEVI.

Residues 1–26 (MNLSSLPFRLLAAAVALCAIAAPASA) form the signal peptide.

It belongs to the FlgI family. As to quaternary structure, the basal body constitutes a major portion of the flagellar organelle and consists of four rings (L,P,S, and M) mounted on a central rod.

Its subcellular location is the periplasm. The protein resides in the bacterial flagellum basal body. Functionally, assembles around the rod to form the L-ring and probably protects the motor/basal body from shearing forces during rotation. The sequence is that of Flagellar P-ring protein from Xanthomonas campestris pv. campestris (strain B100).